We begin with the raw amino-acid sequence, 394 residues long: Exodeoxyribonuclease 7 large subunit (394 aa).

Belongs to the XseA family. As to quaternary structure, heterooligomer composed of large and small subunits.

The protein localises to the cytoplasm. It carries out the reaction Exonucleolytic cleavage in either 5'- to 3'- or 3'- to 5'-direction to yield nucleoside 5'-phosphates.. Its function is as follows. Bidirectionally degrades single-stranded DNA into large acid-insoluble oligonucleotides, which are then degraded further into small acid-soluble oligonucleotides. In Thermotoga sp. (strain RQ2), this protein is Exodeoxyribonuclease 7 large subunit.